A 301-amino-acid polypeptide reads, in one-letter code: MSIEKTYCGFIAIVGRPNVGKSTLLNKLLGQKISITSRKAQTTRHRIVGIHTEGPYQAIYVDTPGLHIEEKRAINRLMNKAASSSIGDVELVIFVVEGTRWTPDDEMVLNKLRDGKAPVILAVNKVDNVQEKADLLPHLQFLASQMSFLDIVPISAETGMNVDTIASIVRKHLPEATHHFPEDYITDRSQRFMASEIIREKLMRFLGAELPYSVTVEIERFVTNERGGYDINGLILVEREGQKKMVIGNKGAKIKTIGIEARKDMQEMFEAPVHLELWVKVKSGWADDERALRSLGYVDDL.

Positions 7–175 constitute an Era-type G domain; that stretch reads YCGFIAIVGR…ASIVRKHLPE (169 aa). A G1 region spans residues 15-22; the sequence is GRPNVGKS. Position 15-22 (15-22) interacts with GTP; the sequence is GRPNVGKS. A G2 region spans residues 41-45; that stretch reads QTTRH. The G3 stretch occupies residues 62–65; that stretch reads DTPG. Residues 62–66 and 124–127 contribute to the GTP site; these read DTPGL and NKVD. Positions 124-127 are G4; the sequence is NKVD. The tract at residues 154 to 156 is G5; that stretch reads ISA. The KH type-2 domain occupies 206 to 283; that stretch reads LGAELPYSVT…HLELWVKVKS (78 aa).

The protein belongs to the TRAFAC class TrmE-Era-EngA-EngB-Septin-like GTPase superfamily. Era GTPase family. In terms of assembly, monomer.

It is found in the cytoplasm. It localises to the cell inner membrane. Functionally, an essential GTPase that binds both GDP and GTP, with rapid nucleotide exchange. Plays a role in 16S rRNA processing and 30S ribosomal subunit biogenesis and possibly also in cell cycle regulation and energy metabolism. The chain is GTPase Era from Salmonella arizonae (strain ATCC BAA-731 / CDC346-86 / RSK2980).